We begin with the raw amino-acid sequence, 264 residues long: Apolipoprotein A-I (264 aa).

The first 18 residues, 1 to 18 (MRGVLVTLAVLFLTGTQA), serve as a signal peptide directing secretion. Repeat copies occupy residues 67 to 88 (LKLA…EDMA) and 89 to 110 (PYYK…AELT). A 10 X approximate tandem repeats region spans residues 67–264 (LKLADNLDTL…FLDELQKSVA (198 aa)). Residues 111–121 (KDLEEVKEKIR) form a 3; half-length repeat. 5 tandem repeats follow at residues 122–143 (PFLD…QRLT), 144–165 (PVAQ…AKLT), 166–187 (PVAE…KNLA), 188–209 (PYSD…EKGI), and 210–231 (PQAS…EKMT). Residues 232–242 (PLVQEFRERLT) form a 9; half-length repeat. Copy 10 of the repeat occupies 243-264 (PYAENLKNRLISFLDELQKSVA).

Belongs to the apolipoprotein A1/A4/E family. As to quaternary structure, homodimer. Major protein of plasma HDL, also found in chylomicrons.

It localises to the secreted. Participates in the reverse transport of cholesterol from tissues to the liver for excretion by promoting cholesterol efflux from tissues and by acting as a cofactor for the lecithin cholesterol acyltransferase (LCAT). The sequence is that of Apolipoprotein A-I (APOA1) from Gallus gallus (Chicken).